The primary structure comprises 2193 residues: Genome polyprotein (2193 aa).

The tract at residues 1-22 (MGSQVSTQRSGSHENSNSASEG) is disordered. A lipid anchor (N-myristoyl glycine; by host) is attached at glycine 2. The Cytoplasmic segment spans residues 2 to 1503 (GSQVSTQRSG…HLNRAVLIMQ (1502 aa)). Amphipathic alpha-helix stretches follow at residues 566 to 588 (GDGIADMIDQAVTSRVGRALTSL) and 568 to 588 (GIADMIDQAVTSRVGRALTSL). Active-site for protease 2A activity residues include histidine 883 and aspartate 901. Residues cysteine 918 and cysteine 920 each contribute to the Zn(2+) site. The active-site For protease 2A activity is cysteine 972. The Zn(2+) site is built by cysteine 978 and histidine 980. Positions 1112–1184 (SASWLKKFND…EQSAASQEDL (73 aa)) are membrane-binding. Residues 1112-1250 (SASWLKKFND…SPGTGKSLAT (139 aa)) form an oligomerization region. Residues 1133-1137 (SNKIS) are RNA-binding. Positions 1216–1374 (EKRMNNYMQF…YKTDLGRLDA (159 aa)) constitute an SF3 helicase domain. 1240 to 1247 (GSPGTGKS) serves as a coordination point for ATP. The Zn(2+) site is built by cysteine 1381, cysteine 1392, and cysteine 1397. A C4-type; degenerate zinc finger spans residues 1381 to 1397 (CSENNTANFKRCSPLVC). The RNA-binding stretch occupies residues 1424 to 1431 (EYNNRYAI). The segment at 1435 to 1440 (IEALFQ) is oligomerization. An intramembrane segment occupies 1504-1519 (SIATVVAVVSLVYVIY). Topologically, residues 1520-2193 (KLFAGFQGAY…NLRRNWLELF (674 aa)) are cytoplasmic. The residue at position 1529 (tyrosine 1529) is an O-(5'-phospho-RNA)-tyrosine. The Peptidase C3 domain maps to 1549–1727 (GPSLDFALSL…FCAGLKRSYF (179 aa)). Active-site for protease 3C activity residues include histidine 1588, glutamate 1619, and cysteine 1695. The 116-residue stretch at 1958–2073 (GSLFAFDYSG…ASYPFPIDCL (116 aa)) folds into the RdRp catalytic domain. 2 residues coordinate Mg(2+): aspartate 1964 and aspartate 2060.

The protein belongs to the picornaviruses polyprotein family. As to quaternary structure, interacts with capsid protein VP1 and capsid protein VP3 to form heterotrimeric protomers. Interacts with capsid protein VP0, and capsid protein VP3 to form heterotrimeric protomers. Five protomers subsequently associate to form pentamers which serve as building blocks for the capsid. Interacts with capsid protein VP2, capsid protein VP3 and capsid protein VP4 following cleavage of capsid protein VP0. In terms of assembly, interacts with capsid protein VP1 and capsid protein VP3 in the mature capsid. As to quaternary structure, interacts with capsid protein VP0 and capsid protein VP1 to form heterotrimeric protomers. Five protomers subsequently associate to form pentamers which serve as building blocks for the capsid. Interacts with capsid protein VP4 in the mature capsid. Interacts with protein 2C; this interaction may be important for virion morphogenesis. Interacts with capsid protein VP1 and capsid protein VP3. In terms of assembly, homodimer. As to quaternary structure, homohexamer; forms a hexameric ring structure with 6-fold symmetry characteristic of AAA+ ATPases. Interacts (via N-terminus) with host RTN3 (via reticulon domain); this interaction is important for viral replication. Interacts with capsid protein VP3; this interaction may be important for virion morphogenesis. Interacts with protein 3CD. In terms of assembly, homodimer. Interacts with host GBF1. Interacts (via GOLD domain) with host ACBD3 (via GOLD domain); this interaction allows the formation of a viral protein 3A/ACBD3 heterotetramer with a 2:2 stoichiometry, which will stimulate the recruitment of host PI4KB in order to synthesize PI4P at the viral RNA replication sites. As to quaternary structure, interacts with RNA-directed RNA polymerase. Interacts with host IFIH1/MDA5; this interaction inhibits host IFIH1. In terms of assembly, interacts with protein 3AB and with RNA-directed RNA polymerase. As to quaternary structure, interacts with Viral protein genome-linked and with protein 3CD. It depends on Mg(2+) as a cofactor. Post-translationally, specific enzymatic cleavages in vivo by the viral proteases yield processing intermediates and the mature proteins. In terms of processing, myristoylation is required for the formation of pentamers during virus assembly. Further assembly of 12 pentamers and a molecule of genomic RNA generates the provirion. During virion maturation, immature virions are rendered infectious following cleavage of VP0 into VP4 and VP2. This maturation seems to be an autocatalytic event triggered by the presence of RNA in the capsid and it is followed by a conformational change infectious virion. Post-translationally, myristoylation is required during RNA encapsidation and formation of the mature virus particle. In terms of processing, VPg is uridylylated by the polymerase into VPg-pUpU. This acts as a nucleotide-peptide primer for the genomic RNA replication.

The protein resides in the virion. It is found in the host cytoplasm. The protein localises to the host cytoplasmic vesicle membrane. It localises to the host nucleus. It catalyses the reaction a ribonucleoside 5'-triphosphate + H2O = a ribonucleoside 5'-diphosphate + phosphate + H(+). It carries out the reaction Selective cleavage of Tyr-|-Gly bond in the picornavirus polyprotein.. The catalysed reaction is RNA(n) + a ribonucleoside 5'-triphosphate = RNA(n+1) + diphosphate. The enzyme catalyses Selective cleavage of Gln-|-Gly bond in the poliovirus polyprotein. In other picornavirus reactions Glu may be substituted for Gln, and Ser or Thr for Gly.. Its activity is regulated as follows. Replication or transcription is subject to high level of random mutations by the nucleotide analog ribavirin. Its function is as follows. Forms an icosahedral capsid of pseudo T=3 symmetry with capsid proteins VP2 and VP3. The capsid is 300 Angstroms in diameter, composed of 60 copies of each capsid protein and enclosing the viral positive strand RNA genome. Capsid protein VP1 mainly forms the vertices of the capsid. Capsid protein VP1 interacts with host cell receptor to provide virion attachment to target host cells. This attachment induces virion internalization. After binding to its receptor, the capsid undergoes conformational changes. Capsid protein VP1 N-terminus (that contains an amphipathic alpha-helix) and capsid protein VP4 are externalized. Together, they shape a pore in the host membrane through which viral genome is translocated to host cell cytoplasm. Forms an icosahedral capsid of pseudo T=3 symmetry with capsid proteins VP2 and VP3. The capsid is 300 Angstroms in diameter, composed of 60 copies of each capsid protein and enclosing the viral positive strand RNA genome. In terms of biological role, lies on the inner surface of the capsid shell. After binding to the host receptor, the capsid undergoes conformational changes. Capsid protein VP4 is released, Capsid protein VP1 N-terminus is externalized, and together, they shape a pore in the host membrane through which the viral genome is translocated into the host cell cytoplasm. Functionally, component of immature procapsids, which is cleaved into capsid proteins VP4 and VP2 after maturation. Allows the capsid to remain inactive before the maturation step. Its function is as follows. Cysteine protease that cleaves viral polyprotein and specific host proteins. It is responsible for the autocatalytic cleavage between the P1 and P2 regions, which is the first cleavage occurring in the polyprotein. Also cleaves the host translation initiation factor EIF4G1, in order to shut down the capped cellular mRNA translation. Inhibits the host nucleus-cytoplasm protein and RNA trafficking by cleaving host members of the nuclear pores. Counteracts stress granule formation probably by antagonizing its assembly or promoting its dissassembly. Cleaves and inhibits host IFIH1/MDA5, thereby inhibiting the type-I IFN production and the establishment of the antiviral state. Cleaves and inhibits host MAVS, thereby inhibiting the type-I IFN production and the establishment of the antiviral state. Plays an essential role in the virus replication cycle by acting as a viroporin. Creates a pore in the host endoplasmic reticulum and as a consequence releases Ca2+ in the cytoplasm of infected cell. In turn, high levels of cytoplasmic calcium may trigger membrane trafficking and transport of viral ER-associated proteins to viroplasms, sites of viral genome replication. In terms of biological role, induces and associates with structural rearrangements of intracellular membranes. Displays RNA-binding, nucleotide binding and NTPase activities. May play a role in virion morphogenesis and viral RNA encapsidation by interacting with the capsid protein VP3. Functionally, localizes the viral replication complex to the surface of membranous vesicles. Together with protein 3CD binds the Cis-Active RNA Element (CRE) which is involved in RNA synthesis initiation. Acts as a cofactor to stimulate the activity of 3D polymerase, maybe through a nucleid acid chaperone activity. Its function is as follows. Localizes the viral replication complex to the surface of membranous vesicles. It inhibits host cell endoplasmic reticulum-to-Golgi apparatus transport and causes the disassembly of the Golgi complex, possibly through GBF1 interaction. This would result in depletion of MHC, trail receptors and IFN receptors at the host cell surface. Plays an essential role in viral RNA replication by recruiting ACBD3 and PI4KB at the viral replication sites, thereby allowing the formation of the rearranged membranous structures where viral replication takes place. Acts as a primer for viral RNA replication and remains covalently bound to viral genomic RNA. VPg is uridylylated prior to priming replication into VPg-pUpU. The oriI viral genomic sequence may act as a template for this. The VPg-pUpU is then used as primer on the genomic RNA poly(A) by the RNA-dependent RNA polymerase to replicate the viral genome. During genome replication, the VPg-RNA linkage is removed by the host TDP2, thereby accelerating replication. During the late stage of the replication cycle, host TDP2 is excluded from sites of viral RNA synthesis and encapsidation, allowing for the generation of progeny virions. In terms of biological role, involved in the viral replication complex and viral polypeptide maturation. It exhibits protease activity with a specificity and catalytic efficiency that is different from protease 3C. Protein 3CD lacks polymerase activity. Protein 3CD binds to the 5'UTR of the viral genome. Functionally, major viral protease that mediates proteolytic processing of the polyprotein. Cleaves host EIF5B, contributing to host translation shutoff. Also cleaves host PABPC1, contributing to host translation shutoff. Binds and inhibits host IFIH1/MDA5, thereby inhibiting the type-I IFN production and the establishment of the antiviral state. Cleaves host MAP3K7/TAK1, resulting in inhibition of TRAF6-triggered NF-kappa-B induction. Cleaves host NLRP1, triggers host N-glycine-mediated degradation of the autoinhibitory NLRP1 N-terminal fragment. Its function is as follows. Replicates the viral genomic RNA on the surface of intracellular membranes. May form linear arrays of subunits that propagate along a strong head-to-tail interaction called interface-I. Covalently attaches UMP to a tyrosine of VPg, which is used to prime RNA synthesis. The positive stranded RNA genome is first replicated at virus induced membranous vesicles, creating a dsRNA genomic replication form. This dsRNA is then used as template to synthesize positive stranded RNA genomes. ss(+)RNA genomes are either translated, replicated or encapsidated. The polypeptide is Genome polyprotein (Homo sapiens (Human)).